Consider the following 316-residue polypeptide: ATP synthase gamma chain (316 aa).

It belongs to the ATPase gamma chain family. In terms of assembly, F-type ATPases have 2 components, CF(1) - the catalytic core - and CF(0) - the membrane proton channel. CF(1) has five subunits: alpha(3), beta(3), gamma(1), delta(1), epsilon(1). CF(0) has three main subunits: a, b and c.

Its subcellular location is the cellular thylakoid membrane. In terms of biological role, produces ATP from ADP in the presence of a proton gradient across the membrane. The gamma chain is believed to be important in regulating ATPase activity and the flow of protons through the CF(0) complex. This Synechococcus sp. (strain WH7803) protein is ATP synthase gamma chain.